The following is a 548-amino-acid chain: Cytochrome P450 monooxygenase hepE (548 aa).

Cys-485 serves as a coordination point for heme.

This sequence belongs to the cytochrome P450 family. Requires heme as cofactor.

The protein operates within secondary metabolite biosynthesis. Cytochrome P450 monooxygenase; part of the gene cluster that mediates the biosynthesis of heptelidic acid (HA), a sesquiterpene lactone that acts as an inhibitor of glyceraldehyde-3-phosphatedehydrogenase (GAPDH) and a growth inhibitor of the salt-tolerant lactic acid bacteria in soy sauce brewing. The protein is Cytochrome P450 monooxygenase hepE of Aspergillus oryzae (strain ATCC 42149 / RIB 40) (Yellow koji mold).